A 240-amino-acid polypeptide reads, in one-letter code: MGVEWLVEKLQEHDITLNDKQKQQFQTYYELLVEWNEKMNLTSITDEEGVYLKHFYDSITAAFYIDMNQELSICDVGAGAGFPSIPLKIVFPQLKVTIVDSLNKRIQFLNHLADALDLRGVSVVHERAENFGNVRGDNRESYDIVTARAVARLSVLSELCLPLVKTGGHFIAMKSSKGEEELEEARFGIGVFGGRVEAVETFELPGDAGERQMIIIEKRSKTPKKYPRKAGTPNKSPLLK.

Residues Gly77, Phe82, 128–129 (AE), and Arg148 each bind S-adenosyl-L-methionine. Residues 217 to 240 (EKRSKTPKKYPRKAGTPNKSPLLK) are disordered.

The protein belongs to the methyltransferase superfamily. RNA methyltransferase RsmG family.

Its subcellular location is the cytoplasm. In terms of biological role, specifically methylates the N7 position of guanine in position 535 of 16S rRNA. In Staphylococcus carnosus (strain TM300), this protein is Ribosomal RNA small subunit methyltransferase G.